The primary structure comprises 281 residues: Aquaporin-9 (281 aa).

Residues 1-17 (MGAFVNTKVYIENKNIR) lie on the Cytoplasmic side of the membrane. A helical membrane pass occupies residues 18–36 (DWLSEALSMFMYMSLLLGS). Topologically, residues 37 to 50 (AATGHFSGREDDAL) are extracellular. The chain crosses the membrane as a helical span at residues 51 to 69 (FGVIFQGFSITFGIYIGGA). Topologically, residues 70 to 71 (MS) are cytoplasmic. Positions 72–84 (GAIINPALTLAVA) form an intramembrane region, discontinuously helical. The NPA 1 motif lies at 76–78 (NPA). The Cytoplasmic portion of the chain corresponds to 85-90 (LLGKIS). A helical transmembrane segment spans residues 91–115 (WRKCIVLQSAQYIGSFIASAVVYLI). Topologically, residues 116 to 157 (YNDSLDAFGAGANFTATEPGVFRKDVAGIWSTFPKTYLKERG) are extracellular. 2 N-linked (GlcNAc...) asparagine glycosylation sites follow: N117 and N128. The helical transmembrane segment at 158–175 (AIFNQIFCSMLLTFGFLA) threads the bilayer. Over 176-187 (ISDYKNFRPSKG) the chain is Cytoplasmic. A helical membrane pass occupies residues 188–204 (LFPIAVGLLVMTVFLAF). The Extracellular segment spans residues 205–207 (SYS). The segment at residues 208 to 222 (TGAAMNPARDFSPRL) is an intramembrane region (discontinuously helical). Residues 213–215 (NPA) carry the NPA 2 motif. Residues 223–241 (WSLIIGYGIEVFSYNQYEW) lie on the Extracellular side of the membrane. Residues 242–262 (FWIPWLMPYVGAMLGALIYQL) form a helical membrane-spanning segment. Residues 263–281 (LIGAQWSKGQKGESKHKDP) lie on the Cytoplasmic side of the membrane.

This sequence belongs to the MIP/aquaporin (TC 1.A.8) family.

It localises to the cell membrane. The catalysed reaction is H2O(in) = H2O(out). Functionally, aquaglyceroporin that may modulate the water content and osmolytes during anhydrobiosis. This Milnesium tardigradum (Water bear) protein is Aquaporin-9.